A 301-amino-acid polypeptide reads, in one-letter code: N-acetylmuramic acid 6-phosphate etherase (301 aa).

The SIS domain maps to 59–222; sequence TSEALMHGGR…STSVMVKLGK (164 aa). Glu87 acts as the Proton donor in catalysis. The active site involves Glu118.

The protein belongs to the GCKR-like family. MurNAc-6-P etherase subfamily. In terms of assembly, homodimer.

It catalyses the reaction N-acetyl-D-muramate 6-phosphate + H2O = N-acetyl-D-glucosamine 6-phosphate + (R)-lactate. The protein operates within amino-sugar metabolism; N-acetylmuramate degradation. In terms of biological role, specifically catalyzes the cleavage of the D-lactyl ether substituent of MurNAc 6-phosphate, producing GlcNAc 6-phosphate and D-lactate. The sequence is that of N-acetylmuramic acid 6-phosphate etherase from Picosynechococcus sp. (strain ATCC 27264 / PCC 7002 / PR-6) (Agmenellum quadruplicatum).